The sequence spans 32 residues: Snaclec (32 aa).

Dimer; disulfide-linked. Expressed by the venom gland.

Its subcellular location is the secreted. Interferes with one step of hemostasis (modulation of platelet aggregation, or coagulation cascade, for example). In Bothrops diporus (Chaco lancehead), this protein is Snaclec.